The primary structure comprises 463 residues: Nuclear hormone receptor family member nhr-3 (463 aa).

Positions 50–125 form a DNA-binding region, nuclear receptor; it reads STICSVCCDE…VGMEPDAIRP (76 aa). 2 NR C4-type zinc fingers span residues 53–73 and 89–113; these read CSVC…CFGC and CRYS…FQKC. A compositionally biased stretch (basic and acidic residues) spans 121–131; the sequence is DAIRPDRDKTG. Positions 121 to 143 are disordered; sequence DAIRPDRDKTGRQKNPRRNTEGS. The NR LBD domain maps to 199–462; that stretch reads EIENIVIQLQ…VLEELLFLDR (264 aa).

It belongs to the nuclear hormone receptor family.

The protein localises to the nucleus. Its function is as follows. Orphan nuclear receptor. This is Nuclear hormone receptor family member nhr-3 (nhr-3) from Caenorhabditis elegans.